The sequence spans 1185 residues: ELMO domain-containing protein F (1185 aa).

8 disordered regions span residues 88–133 (QPSP…GNNN), 176–196 (ISTN…NTAE), 361–409 (NNNS…VENE), 566–628 (KSTD…NTKS), 642–805 (ETER…KSSG), 819–868 (LGEK…PYII), 883–989 (DLDF…TQVT), and 1044–1114 (QKQK…KPVL). Low complexity-rich tracts occupy residues 94–127 (STIH…SSPI), 176–194 (ISTN…NNNT), 361–406 (NNNS…NNNV), and 587–613 (PQSQ…SSSS). Residues 275-488 (DRQNVLSFLN…KTRAVLSRIK (214 aa)) enclose the ELMO domain. A compositionally biased stretch (polar residues) spans 648–665 (SLTGSNGITDGGDSNPNS). Over residues 688-699 (SENGSSSSFSFE) the composition is skewed to low complexity. The segment covering 721-732 (FNSLTGELTMNI) has biased composition (polar residues). 2 stretches are compositionally biased toward low complexity: residues 733 to 760 (SSSS…PNVS) and 767 to 780 (TTTT…TTTT). A compositionally biased stretch (polar residues) spans 781-790 (DDQSQQQVPP). Basic residues predominate over residues 829–841 (KVKSKKEKKKKSK). 4 stretches are compositionally biased toward low complexity: residues 853–864 (NNSANNSSYNNS), 912–974 (SSSN…QQPQ), 1053–1072 (DENQ…SSNE), and 1096–1109 (GRNS…SSLS).

The protein is ELMO domain-containing protein F (elmoF) of Dictyostelium discoideum (Social amoeba).